Consider the following 405-residue polypeptide: Acetate kinase (405 aa).

Residue asparagine 7 participates in Mg(2+) binding. Lysine 14 contributes to the ATP binding site. Arginine 99 provides a ligand contact to substrate. Residue aspartate 156 is the Proton donor/acceptor of the active site. ATP contacts are provided by residues 215-219 (HLGNG), 290-292 (DMR), and 338-342 (GVGEH). A Mg(2+)-binding site is contributed by glutamate 391.

This sequence belongs to the acetokinase family. In terms of assembly, homodimer. Requires Mg(2+) as cofactor. It depends on Mn(2+) as a cofactor.

It localises to the cytoplasm. The enzyme catalyses acetate + ATP = acetyl phosphate + ADP. Its pathway is metabolic intermediate biosynthesis; acetyl-CoA biosynthesis; acetyl-CoA from acetate: step 1/2. Its function is as follows. Catalyzes the formation of acetyl phosphate from acetate and ATP. Can also catalyze the reverse reaction. This Nostoc punctiforme (strain ATCC 29133 / PCC 73102) protein is Acetate kinase.